We begin with the raw amino-acid sequence, 328 residues long: GMP reductase (328 aa).

Catalysis depends on Cys-176, which acts as the Thioimidate intermediate. 205-228 (IIADGGIRTHGDIAKSIRFGASMI) contacts NADP(+).

This sequence belongs to the IMPDH/GMPR family. GuaC type 2 subfamily.

The catalysed reaction is IMP + NH4(+) + NADP(+) = GMP + NADPH + 2 H(+). Its function is as follows. Catalyzes the irreversible NADPH-dependent deamination of GMP to IMP. It functions in the conversion of nucleobase, nucleoside and nucleotide derivatives of G to A nucleotides, and in maintaining the intracellular balance of A and G nucleotides. This chain is GMP reductase, found in Streptococcus pneumoniae (strain Taiwan19F-14).